The chain runs to 215 residues: Pre-hexon-linking protein VIII (215 aa).

Residue Thr-62 is modified to Phosphothreonine; by host. A propeptide spanning residues 110 to 150 is cleaved from the precursor; the sequence is AWINYKNGSVRYEAPLQLAEEQVGGPLNAFAIKHQLQLAGG.

It belongs to the adenoviridae hexon-linking protein family. As to quaternary structure, interacts with the peripentonal hexons as well as the hexons in the facets. Part of a complex composed of the core-capsid bridging protein, the endosome lysis protein VI and the hexon-linking protein VIII; these interactions bridge the virus core to the capsid. Cleaved by the viral protease during virion maturation. May cause the middle segment to be shed from the capsid.

It is found in the virion. It localises to the host nucleus. In terms of biological role, structural component of the virion that acts as a cement protein on the capsid interior and which glue the peripentonal hexons and group-of-nine hexons together. The polypeptide is Pre-hexon-linking protein VIII (Murine adenovirus A serotype 1 (MAdV-1)).